Here is a 122-residue protein sequence, read N- to C-terminus: Large ribosomal subunit protein uL14c (122 aa).

This sequence belongs to the universal ribosomal protein uL14 family. Part of the 50S ribosomal subunit.

The protein localises to the plastid. Functionally, binds to 23S rRNA. The chain is Large ribosomal subunit protein uL14c from Cuscuta exaltata (Tall dodder).